The chain runs to 164 residues: E3 ubiquitin ligase complex SCF subunit sconC (164 aa).

An interaction with the F-box domain of F-box proteins region spans residues 106 to 164; sequence ILAANYLDIKALLDVGCKTVANMIKGKSPEEIRKTFNIQNDFTPEEEDQIRRENEWAEE.

It belongs to the SKP1 family. In terms of assembly, component of the SCF (SKP1-CUL1-F-box protein) E3 ubiquitin ligase complexes.

The protein operates within protein modification; protein ubiquitination. Its function is as follows. Essential component of the SCF (SKP1-CUL1-F-box protein) E3 ubiquitin ligase complexes, which mediate the ubiquitination and subsequent proteasomal degradation of target proteins. Controls sulfur metabolite repression, probably by mediating the inactivation or degradation of the metR transcription factor. In Arthroderma benhamiae (strain ATCC MYA-4681 / CBS 112371) (Trichophyton mentagrophytes), this protein is E3 ubiquitin ligase complex SCF subunit sconC (sconC).